The primary structure comprises 472 residues: Arginine biosynthesis bifunctional protein ArgJ, mitochondrial (472 aa).

Positions 200, 229, 240, 327, 467, and 472 each coordinate substrate. The active-site Nucleophile is the Thr240.

It belongs to the ArgJ family. In terms of assembly, heterodimer of an alpha and a beta chain. In terms of processing, the alpha and beta chains are autoproteolytically processed from a single precursor protein within the mitochondrion.

Its subcellular location is the mitochondrion matrix. It catalyses the reaction N(2)-acetyl-L-ornithine + L-glutamate = N-acetyl-L-glutamate + L-ornithine. The catalysed reaction is L-glutamate + acetyl-CoA = N-acetyl-L-glutamate + CoA + H(+). The protein operates within amino-acid biosynthesis; L-arginine biosynthesis; L-ornithine and N-acetyl-L-glutamate from L-glutamate and N(2)-acetyl-L-ornithine (cyclic): step 1/1. It functions in the pathway amino-acid biosynthesis; L-arginine biosynthesis; N(2)-acetyl-L-ornithine from L-glutamate: step 1/4. Its function is as follows. Catalyzes two activities which are involved in the cyclic version of arginine biosynthesis: the synthesis of acetylglutamate from glutamate and acetyl-CoA, and of ornithine by transacetylation between acetylornithine and glutamate. The sequence is that of Arginine biosynthesis bifunctional protein ArgJ, mitochondrial from Talaromyces marneffei (strain ATCC 18224 / CBS 334.59 / QM 7333) (Penicillium marneffei).